The chain runs to 107 residues: Urease subunit beta (107 aa).

It belongs to the urease beta subunit family. Heterotrimer of UreA (gamma), UreB (beta) and UreC (alpha) subunits. Three heterotrimers associate to form the active enzyme.

The protein localises to the cytoplasm. It carries out the reaction urea + 2 H2O + H(+) = hydrogencarbonate + 2 NH4(+). Its pathway is nitrogen metabolism; urea degradation; CO(2) and NH(3) from urea (urease route): step 1/1. The protein is Urease subunit beta of Escherichia coli.